Reading from the N-terminus, the 640-residue chain is MEPSPLSPSGAALPLPLSLAPPPLPLPAAAVVHVSFPEVTSALLESLNQQRLQGQLCDVSIRVQGREFRAHRAVLAASSPYFHDQVLLKGMTSISLPSVMDPGAFETVLASAYTGRLSMAAADIVNFLTVGSVLQMWHIVDKCTELLREGRASATTTTITPAAATSATVPGAGVPSGSGATVVPATVGSVRSHASSRASENQSPSSSNYFSPRESTDFSSSSQEAFPASAVGSGERRGGGPVFPAPVVGSGGATSGKLLLEADELCHDGGDERGPVVPGAGLRRPTYAPPSIMPQKHWVYVKRGGNSPAPAPLVPQDPDLEEDEEEDLVLTCEDDEDEELGGGSRVPEAGGREATLSISDVRTLTEPPDKGEEQVNFCESSNDFGSYDGGGPGAGLDDSGGPTPSSYAPSHPPRPLLPLDMQGNQILVFPSSSSSSSSSSSSQAPGQPPGNQAEHGAVTLGGTSSGALGMPGGPGGTPGGTGSGDGNKIFLCHCGKAFSHKSMRDRHVNMHLNLRPFDCPVCNKKFKMKHHLTEHMKTHTGLKPYECGVCAKKFMWRDSFMRHRGHCERRHRLVGGGGGGGPGPGGPTGPTLPLKRESPGAGGGSGDEASGATPQSSRRVWSPPSVHKVEMGFGGGGGTN.

The BTB domain occupies 57–121 (CDVSIRVQGR…AYTGRLSMAA (65 aa)). Disordered stretches follow at residues 191-244 (RSHA…PVFP), 308-327 (PAPAPLVPQDPDLEEDEEED), and 332-482 (CEDD…GGTG). Residues 192-210 (SHASSRASENQSPSSSNYF) are compositionally biased toward polar residues. Residue S203 is modified to Phosphoserine. A compositionally biased stretch (acidic residues) spans 318 to 327 (PDLEEDEEED). Over residues 431 to 442 (SSSSSSSSSSSS) the composition is skewed to low complexity. Gly residues predominate over residues 469–482 (GMPGGPGGTPGGTG). Residues 490-511 (FLCHCGKAFSHKSMRDRHVNMH) form a C2H2-type 1; atypical zinc finger. 2 C2H2-type zinc fingers span residues 517-539 (FDCPVCNKKFKMKHHLTEHMKTH) and 545-571 (YECGVCAKKFMWRDSFMRHRGHCERRH). Residues 571–640 (HRLVGGGGGG…MGFGGGGGTN (70 aa)) are disordered. Gly residues predominate over residues 574–588 (VGGGGGGGPGPGGPT).

This sequence belongs to the krueppel C2H2-type zinc-finger protein family.

The protein resides in the nucleus. May be involved in transcriptional regulation. The polypeptide is Zinc finger and BTB domain-containing protein 22 (ZBTB22) (Canis lupus familiaris (Dog)).